We begin with the raw amino-acid sequence, 495 residues long: Probable plastidic glucose transporter 3 (495 aa).

The next 12 membrane-spanning stretches (helical) occupy residues 55–75 (LPHV…LGVV), 97–117 (LVVS…GLVA), 131–151 (LPMI…GMLL), 154–174 (FLVG…VTEV), 183–203 (YGSS…FAGI), 214–234 (ICFW…ELCV), 294–314 (VVFI…NAVF), 330–350 (SANI…VVLM), 357–377 (VLLI…AIAY), 384–404 (FGTL…FATG), 425–445 (ALAV…LLFL), and 451–471 (LGSV…VIFV).

The protein belongs to the major facilitator superfamily. Sugar transporter (TC 2.A.1.1) family.

Its subcellular location is the plastid. The protein localises to the chloroplast membrane. Functionally, may be involved in the efflux of glucose towards the cytosol. The polypeptide is Probable plastidic glucose transporter 3 (Arabidopsis thaliana (Mouse-ear cress)).